The sequence spans 259 residues: tRNA-cytidine(32) 2-sulfurtransferase (259 aa).

The PP-loop motif signature appears at 40 to 45 (SGGKDS). [4Fe-4S] cluster contacts are provided by C114, C117, and C205.

Belongs to the TtcA family. Homodimer. The cofactor is Mg(2+). [4Fe-4S] cluster is required as a cofactor.

The protein resides in the cytoplasm. The catalysed reaction is cytidine(32) in tRNA + S-sulfanyl-L-cysteinyl-[cysteine desulfurase] + AH2 + ATP = 2-thiocytidine(32) in tRNA + L-cysteinyl-[cysteine desulfurase] + A + AMP + diphosphate + H(+). It participates in tRNA modification. In terms of biological role, catalyzes the ATP-dependent 2-thiolation of cytidine in position 32 of tRNA, to form 2-thiocytidine (s(2)C32). The sulfur atoms are provided by the cysteine/cysteine desulfurase (IscS) system. This is tRNA-cytidine(32) 2-sulfurtransferase from Bdellovibrio bacteriovorus (strain ATCC 15356 / DSM 50701 / NCIMB 9529 / HD100).